A 333-amino-acid chain; its full sequence is Fructose-1,6-bisphosphatase class 1 (333 aa).

The Mg(2+) site is built by Glu92, Asp113, Leu115, and Asp116. Substrate is bound by residues 116 to 119 (DGSS), Asn209, Tyr242, and Lys272. Glu278 contacts Mg(2+).

Belongs to the FBPase class 1 family. In terms of assembly, homotetramer. The cofactor is Mg(2+).

Its subcellular location is the cytoplasm. It carries out the reaction beta-D-fructose 1,6-bisphosphate + H2O = beta-D-fructose 6-phosphate + phosphate. It participates in carbohydrate biosynthesis; Calvin cycle. In Chlorobium luteolum (strain DSM 273 / BCRC 81028 / 2530) (Pelodictyon luteolum), this protein is Fructose-1,6-bisphosphatase class 1.